Here is a 646-residue protein sequence, read N- to C-terminus: Long-chain fatty acid transport protein 1 (646 aa).

At 1–13 (MRAPGAGTASVAS) the chain is on the extracellular side. The helical transmembrane segment at 14-34 (LALLWFLGLPWTWSAAAAFCV) threads the bilayer. At 35-646 (YVGGGGWRFL…ARICAGDFSL (612 aa)) the chain is on the cytoplasmic side. The segment at 191 to 475 (EVSEQLGKSL…YVSDSATNKK (285 aa)) is sufficient for oligomerization. Position 246-257 (246-257 (YIYTSGTTGLPK)) interacts with AMP.

This sequence belongs to the ATP-dependent AMP-binding enzyme family. As to quaternary structure, self-associates. May function as a homodimer. Interacts with EPRS1; mediates the translocation of SLC27A1 from the cytoplasm to the plasma membrane thereby increasing the uptake of long-chain fatty acids. Interacts with DGAT2 and this interaction is enhanced in the presence of ZFYVE1. Higher expression in white adipose tissue than in heart. Highest expression in skeletal muscle, heart and fat. Lower levels in brain, kidney, lung, liver and testis. No expression in spleen or intestine.

It is found in the cell membrane. The protein resides in the mitochondrion outer membrane. The protein localises to the endomembrane system. Its subcellular location is the cytoplasm. The catalysed reaction is a fatty acid(in) = a fatty acid(out). The enzyme catalyses (9Z)-octadecenoate(out) = (9Z)-octadecenoate(in). It catalyses the reaction hexadecanoate(out) = hexadecanoate(in). It carries out the reaction (5Z,8Z,11Z,14Z)-eicosatetraenoate(out) = (5Z,8Z,11Z,14Z)-eicosatetraenoate(in). The catalysed reaction is (9Z,12Z)-octadecadienoate(out) = (9Z,12Z)-octadecadienoate(in). The enzyme catalyses a long-chain fatty acid + ATP + CoA = a long-chain fatty acyl-CoA + AMP + diphosphate. It catalyses the reaction (5Z,8Z,11Z,14Z)-eicosatetraenoate + ATP + CoA = (5Z,8Z,11Z,14Z)-eicosatetraenoyl-CoA + AMP + diphosphate. It carries out the reaction a very long-chain fatty acid + ATP + CoA = a very long-chain fatty acyl-CoA + AMP + diphosphate. The catalysed reaction is tetracosanoate + ATP + CoA = tetracosanoyl-CoA + AMP + diphosphate. Its activity is regulated as follows. Inhibited by Triacsin C. Both insulin and muscle contraction stimulate translocation to the plasma membrane in muscle, increasing fatty acid transport activity. Functionally, mediates the import of long-chain fatty acids (LCFA) into the cell by facilitating their transport at the plasma membrane. Also functions as an acyl-CoA ligase catalyzing the ATP-dependent formation of fatty acyl-CoA using LCFA and very-long-chain fatty acids (VLCFA) as substrates, which prevents fatty acid efflux from cells and might drive more fatty acid uptake. May act directly as a bona fide transporter, or alternatively, in a cytoplasmic or membrane-associated multimeric protein complex to trap and draw fatty acids towards accumulation. Plays a pivotal role in regulating available LCFA substrates from exogenous sources in tissues undergoing high levels of beta-oxidation or triglyceride synthesis. May be involved in regulation of cholesterol metabolism. Probably involved in fatty acid transport across the blood barrier. In Mus musculus (Mouse), this protein is Long-chain fatty acid transport protein 1.